Consider the following 113-residue polypeptide: Phosphorelay protein LuxU (113 aa).

The region spanning 18-113 is the HPt domain; the sequence is GEENVPILVN…THQCYSDLVH (96 aa). His57 is subject to Phosphohistidine.

In terms of assembly, monomer.

Phosphorelay protein which receives sensory signals from a sensory kinase and transmit them to LuxO. At low cell density, a phosphoryl group is transferred from the sensory kinase, probably on His-57 and this phosphoryl group is further transferred to LuxO. This is Phosphorelay protein LuxU (luxU) from Vibrio cholerae serotype O1 (strain ATCC 39315 / El Tor Inaba N16961).